A 100-amino-acid polypeptide reads, in one-letter code: Urease subunit gamma 2 (100 aa).

Belongs to the urease gamma subunit family. As to quaternary structure, heterotrimer of UreA (gamma), UreB (beta) and UreC (alpha) subunits. Three heterotrimers associate to form the active enzyme.

The protein resides in the cytoplasm. It carries out the reaction urea + 2 H2O + H(+) = hydrogencarbonate + 2 NH4(+). It participates in nitrogen metabolism; urea degradation; CO(2) and NH(3) from urea (urease route): step 1/1. Its function is as follows. Disrupting the ure2 operon has no effect on urease activity or pathogen survival in BALB/c mice when administered orally. This Brucella abortus (strain 2308) protein is Urease subunit gamma 2.